Reading from the N-terminus, the 556-residue chain is Formate--tetrahydrofolate ligase (556 aa).

Residue 65 to 72 participates in ATP binding; sequence TPAGEGKS.

Belongs to the formate--tetrahydrofolate ligase family.

It carries out the reaction (6S)-5,6,7,8-tetrahydrofolate + formate + ATP = (6R)-10-formyltetrahydrofolate + ADP + phosphate. Its pathway is one-carbon metabolism; tetrahydrofolate interconversion. In Streptococcus suis (strain 98HAH33), this protein is Formate--tetrahydrofolate ligase.